Consider the following 431-residue polypeptide: MTEPLDLAIIGFGPASLSFLIALHDHSEEPLKNKKIRVFEKLPTFSWHEGMLIPGSNMQISFVKDLATPRDPTSYFTFLNYLHSHGQERLSGFLNMSTLEPSRYEYHDYLCWAASHFSKFVEYNANINKLHYDAATDLYIVGHGDTQWQAKNIIITTGCQPYIPPLYKSVDSPLIVHSSKFMSDHSQKLLRNSKHGILVVGCGQSAAEIWKHCHYSLDPKTPLAMCFRNLAPVPSDSSPFVNSLYFDSHNSHWWYNLPTEARLKGLSVGRTTNYSVVKESLLEEMFKECYLQKLRYGQEFHQIMGDTDIQSIKNEGDHLVVQLTSQMDKSKKPETRKIDVLYVATGYDHESFDVLMSSLFPNSQGAQISEEYCVLNAPSKQGKVYVAGITSNQHGIGETLLSWAAIRAGGLAKELFGPSKPTARVPASYLN.

Residues 40–48 (EKLPTFSWH) and Q59 each bind FAD. A substrate-binding site is contributed by K64. Residues 202–205 (CGQS) and R228 each bind NADP(+). Substrate-binding positions include 242-245 (NSLY) and N273. An NADP(+)-binding site is contributed by 273 to 275 (NYS). 399-401 (TLL) provides a ligand contact to FAD. S402 is a substrate binding site.

The protein belongs to the lysine N(6)-hydroxylase/L-ornithine N(5)-oxygenase family. FAD is required as a cofactor.

It is found in the cytoplasm. It localises to the nucleus. The catalysed reaction is L-ornithine + NADPH + O2 = N(5)-hydroxy-L-ornithine + NADP(+) + H2O. It carries out the reaction L-ornithine + NADH + O2 = N(5)-hydroxy-L-ornithine + NAD(+) + H2O. The protein operates within siderophore biosynthesis; ferrichrome biosynthesis. In terms of biological role, catalyzes the conversion of L-ornithine to N(5)-hydroxyornithine, the first step in the biosynthesis of all hydroxamate-containing siderophores, such as ferrichrome. This chain is L-ornithine N(5)-monooxygenase, found in Schizosaccharomyces pombe (strain 972 / ATCC 24843) (Fission yeast).